We begin with the raw amino-acid sequence, 677 residues long: MADTCFRLHTEFEPTGDQPEAIGQIVANLGHGVRDQVLLGVTGSGKTFTVANVIAACNRPALILAPNKTLAAQLYNEFRALFPDNAVEYFVSYYDYYQPEAYVPASDTYIEKDSSINDNIDKLRHAATHALLTRRDVVIVASVSCIYGLGSPEYYARLVIPVECGQRFSMDALMTRLVEVQYQRNDFDFHRGTFRVRGDVLEVIPAYHHERALRIEFFGDDIDAISEIDPLTGEVLGSVGKTVIYPASHYVSDRDNLVRAMSDIRDELGERLREYQSANRLVEAQRLEQRTMLDLEMMEELGYCNGIENYSRHLDGRAAGQPPSCLLDYFPDDFLLFVDESHITVPQVGAMYKGDRSRKSTLVDFGFRLPSALDNRPLEFAEFLTRINQTVYVSATPGKWELDRSQGVIAEQIIRPTGLVDPVVEVRPTRGQVDDLLAECRARAARDERVLITTLTKRMAEDLTEHLGNMGLSVRYLHSDIDTMERMAIIQALRRGECDVLVGINLLREGLDIPEVSLVSILDADKEGFLRSTGSLIQTFGRAARNAAGRVILYADTVTASMRAAMDETARRRERQQAWNEANGIEPRTIRKSLDTPFDAIYSAASEGGKGKGRGRGRQAAPAVENVAEYGTSPEDMAKHIQKLEREMREAAKELEFERAATLRDRIRLLRERLIEA.

The 388-residue stretch at 27 to 414 (ANLGHGVRDQ…SQGVIAEQII (388 aa)) folds into the Helicase ATP-binding domain. 40-47 (GVTGSGKT) provides a ligand contact to ATP. The short motif at 93–116 (YYDYYQPEAYVPASDTYIEKDSSI) is the Beta-hairpin element. In terms of domain architecture, Helicase C-terminal spans 432–594 (QVDDLLAECR…IEPRTIRKSL (163 aa)). A UVR domain is found at 638–673 (AKHIQKLEREMREAAKELEFERAATLRDRIRLLRER).

It belongs to the UvrB family. As to quaternary structure, forms a heterotetramer with UvrA during the search for lesions. Interacts with UvrC in an incision complex.

It localises to the cytoplasm. Functionally, the UvrABC repair system catalyzes the recognition and processing of DNA lesions. A damage recognition complex composed of 2 UvrA and 2 UvrB subunits scans DNA for abnormalities. Upon binding of the UvrA(2)B(2) complex to a putative damaged site, the DNA wraps around one UvrB monomer. DNA wrap is dependent on ATP binding by UvrB and probably causes local melting of the DNA helix, facilitating insertion of UvrB beta-hairpin between the DNA strands. Then UvrB probes one DNA strand for the presence of a lesion. If a lesion is found the UvrA subunits dissociate and the UvrB-DNA preincision complex is formed. This complex is subsequently bound by UvrC and the second UvrB is released. If no lesion is found, the DNA wraps around the other UvrB subunit that will check the other stand for damage. This chain is UvrABC system protein B, found in Nitratidesulfovibrio vulgaris (strain ATCC 29579 / DSM 644 / CCUG 34227 / NCIMB 8303 / VKM B-1760 / Hildenborough) (Desulfovibrio vulgaris).